An 849-amino-acid chain; its full sequence is Leucine--tRNA ligase (849 aa).

A 'HIGH' region motif is present at residues 44–54 (PYPSGRIHMGH). The short motif at 620–624 (KMSKS) is the 'KMSKS' region element. Position 623 (Lys-623) interacts with ATP.

It belongs to the class-I aminoacyl-tRNA synthetase family.

The protein resides in the cytoplasm. The catalysed reaction is tRNA(Leu) + L-leucine + ATP = L-leucyl-tRNA(Leu) + AMP + diphosphate. The polypeptide is Leucine--tRNA ligase (Sphingopyxis alaskensis (strain DSM 13593 / LMG 18877 / RB2256) (Sphingomonas alaskensis)).